Reading from the N-terminus, the 164-residue chain is Endoribonuclease YbeY (164 aa).

Residues His-117, His-121, and His-127 each contribute to the Zn(2+) site.

It belongs to the endoribonuclease YbeY family. Zn(2+) is required as a cofactor.

It is found in the cytoplasm. Functionally, single strand-specific metallo-endoribonuclease involved in late-stage 70S ribosome quality control and in maturation of the 3' terminus of the 16S rRNA. In Mycoplasma capricolum subsp. capricolum (strain California kid / ATCC 27343 / NCTC 10154), this protein is Endoribonuclease YbeY.